Here is a 182-residue protein sequence, read N- to C-terminus: Orotate phosphoribosyltransferase (182 aa).

Residues R91, K92, K95, H97, and 117-125 contribute to the 5-phospho-alpha-D-ribose 1-diphosphate site; that span reads EDVTTTGGS. Residues T121 and R149 each coordinate orotate.

This sequence belongs to the purine/pyrimidine phosphoribosyltransferase family. PyrE subfamily. As to quaternary structure, homodimer. Requires Mg(2+) as cofactor.

It catalyses the reaction orotidine 5'-phosphate + diphosphate = orotate + 5-phospho-alpha-D-ribose 1-diphosphate. Its pathway is pyrimidine metabolism; UMP biosynthesis via de novo pathway; UMP from orotate: step 1/2. In terms of biological role, catalyzes the transfer of a ribosyl phosphate group from 5-phosphoribose 1-diphosphate to orotate, leading to the formation of orotidine monophosphate (OMP). The protein is Orotate phosphoribosyltransferase of Pyrococcus furiosus (strain ATCC 43587 / DSM 3638 / JCM 8422 / Vc1).